Here is a 458-residue protein sequence, read N- to C-terminus: MNKFAIVLAAGKGTRMKSALPKVLHQVAGKSMLAHVLTSVSEVEIAKNVVIVGHEADRVIATLPKGTQFVKQVEQLGTGHAVRIAADLLANEDGATLVIAGDTPLITGQTLEALFDYHFAQNATATILTAIAPNPTGYGRIIRDENGSVEKIVEQKDANDFEKSITEINTGTYIFDNKSLFKALNEITTDNAQGEYYLTDVIEIFKKAGQTVAAHILDDFDESLGVNDRVALSQAELTMRKRINHQHMVNGVTLIDPATTYIDSEVTIGEETVIEANVTIKGNTFIGKNVLITNGSRIENSEIHSNCEVRNSTVEESRMSVGSNVGPYAHLRPGTVLSEEVHVGNFVEIKGSTLGKGTKAGHLTYIGNATVGEKVNFGAGTITANFDGKNKFNTEIDDFAFIGSNSTIIAPLHIGKNALTAAGSVVTEDVPDEAVEIGRGKQVNKLGRAKKMPHYRGQ.

The segment at 1-229 (MNKFAIVLAA…FDESLGVNDR (229 aa)) is pyrophosphorylase. UDP-N-acetyl-alpha-D-glucosamine is bound by residues 8 to 11 (LAAG), Lys-22, Gln-72, and 77 to 78 (GT). Position 102 (Asp-102) interacts with Mg(2+). The UDP-N-acetyl-alpha-D-glucosamine site is built by Gly-139, Glu-154, Asn-169, and Asn-227. A Mg(2+)-binding site is contributed by Asn-227. The linker stretch occupies residues 230–250 (VALSQAELTMRKRINHQHMVN). The N-acetyltransferase stretch occupies residues 251–458 (GVTLIDPATT…AKKMPHYRGQ (208 aa)). Residues Arg-332 and Lys-350 each coordinate UDP-N-acetyl-alpha-D-glucosamine. His-362 functions as the Proton acceptor in the catalytic mechanism. UDP-N-acetyl-alpha-D-glucosamine-binding residues include Tyr-365 and Asn-376. Residues Ala-379, Ser-404, Ala-422, and Arg-439 each contribute to the acetyl-CoA site.

This sequence in the N-terminal section; belongs to the N-acetylglucosamine-1-phosphate uridyltransferase family. In the C-terminal section; belongs to the transferase hexapeptide repeat family. In terms of assembly, homotrimer. Mg(2+) serves as cofactor.

The protein localises to the cytoplasm. The catalysed reaction is alpha-D-glucosamine 1-phosphate + acetyl-CoA = N-acetyl-alpha-D-glucosamine 1-phosphate + CoA + H(+). The enzyme catalyses N-acetyl-alpha-D-glucosamine 1-phosphate + UTP + H(+) = UDP-N-acetyl-alpha-D-glucosamine + diphosphate. Its pathway is nucleotide-sugar biosynthesis; UDP-N-acetyl-alpha-D-glucosamine biosynthesis; N-acetyl-alpha-D-glucosamine 1-phosphate from alpha-D-glucosamine 6-phosphate (route II): step 2/2. It functions in the pathway nucleotide-sugar biosynthesis; UDP-N-acetyl-alpha-D-glucosamine biosynthesis; UDP-N-acetyl-alpha-D-glucosamine from N-acetyl-alpha-D-glucosamine 1-phosphate: step 1/1. It participates in bacterial outer membrane biogenesis; LPS lipid A biosynthesis. Catalyzes the last two sequential reactions in the de novo biosynthetic pathway for UDP-N-acetylglucosamine (UDP-GlcNAc). The C-terminal domain catalyzes the transfer of acetyl group from acetyl coenzyme A to glucosamine-1-phosphate (GlcN-1-P) to produce N-acetylglucosamine-1-phosphate (GlcNAc-1-P), which is converted into UDP-GlcNAc by the transfer of uridine 5-monophosphate (from uridine 5-triphosphate), a reaction catalyzed by the N-terminal domain. This chain is Bifunctional protein GlmU, found in Lactococcus lactis subsp. lactis (strain IL1403) (Streptococcus lactis).